The sequence spans 390 residues: Isoaspartyl dipeptidase (390 aa).

Zn(2+)-binding residues include H68 and H70. Substrate contacts are provided by residues G75–E77, T106, and Y137. K162 serves as a coordination point for Zn(2+). K162 is modified (N6-carboxylysine). R169 provides a ligand contact to substrate. Residues H201 and H230 each coordinate Zn(2+). R233 is a substrate binding site. Residue D285 participates in Zn(2+) binding. The active-site Proton acceptor is the D285. Residue S289 coordinates substrate.

This sequence belongs to the peptidase M38 family. It depends on Zn(2+) as a cofactor. The cofactor is Co(2+). In terms of processing, carboxylation allows a single lysine to coordinate two zinc ions.

It is found in the cytoplasm. Its activity is regulated as follows. P-hydroxymercuribenzoate causes a slight inhibition (8 to 17 %). Iodoacetamide, o-iodosobenzoate and ammonium persulfate do not inhibit the enzyme activity. Its function is as follows. Catalyzes the hydrolytic cleavage of a subset of L-isoaspartyl (L-beta-aspartyl) dipeptides. Used to degrade proteins damaged by L-isoaspartyl residues formation. The best substrate for the enzyme reported thus far is iso-Asp-Leu. In Escherichia coli (strain K12), this protein is Isoaspartyl dipeptidase (iadA).